Reading from the N-terminus, the 188-residue chain is MAQTTNDIKNGSVLNLDGQLWTVMKFQHVKPGKGPAFVRTTIKNVLSGKIVDKTFNAGMKMEFETVDNRTLQYSYEDGDNFVFMDMTTYDQIMVPKTLLGDKAKFLLEGTDCLVSFHDGTPLSVDLPGSVVLTITHTEPGLQGNRSNAGTKPATVETGAEIQVPLFINEGDRVKINTEDGSYTGRENN.

The protein belongs to the elongation factor P family.

The protein localises to the cytoplasm. The protein operates within protein biosynthesis; polypeptide chain elongation. Functionally, involved in peptide bond synthesis. Stimulates efficient translation and peptide-bond synthesis on native or reconstituted 70S ribosomes in vitro. Probably functions indirectly by altering the affinity of the ribosome for aminoacyl-tRNA, thus increasing their reactivity as acceptors for peptidyl transferase. In Bifidobacterium longum (strain DJO10A), this protein is Elongation factor P.